A 214-amino-acid chain; its full sequence is MRCKMKFIVFEGLDGSGKSSLMAALERELQNRAINFLRTREPGGTPLGDEIRNMILRKEGPAPTPRTELLLYEASRSQHVDQVIRPALAAGTWVLCDRFAASSVAFQSGGRAISEADVVMLNTFATGGLKADITVLLDLSVEESRRRRQGRGAVTGETEDRIESEADTFHENVRQSFLKQSREDAAAWIVLDARETPEVLFKQLLQSLTERKVL.

12–19 is an ATP binding site; it reads GLDGSGKS.

It belongs to the thymidylate kinase family.

It carries out the reaction dTMP + ATP = dTDP + ADP. Its function is as follows. Phosphorylation of dTMP to form dTDP in both de novo and salvage pathways of dTTP synthesis. The sequence is that of Thymidylate kinase from Bdellovibrio bacteriovorus (strain ATCC 15356 / DSM 50701 / NCIMB 9529 / HD100).